The chain runs to 888 residues: Calcium-transporting ATPase 1 (888 aa).

The next 4 membrane-spanning stretches (helical) occupy residues 53-75 (IFAQINDVLVYVLIIAALISAFV), 79-97 (ADASIIALVVVLNAVIGVV), 246-266 (VGKYLGFVAVAICIVMFLIGF), and 283-303 (AVAAIPEGLPAIVSIVLAIGV). Valine 284, alanine 285, isoleucine 287, and glutamate 289 together coordinate Ca(2+). Aspartate 331 acts as the 4-aspartylphosphate intermediate in catalysis. 6 helical membrane passes run 675 to 695 (ILFLLSCNFGEIITLFLAILL), 703 to 723 (PIHILWVNLITDTLPALSLGV), 747 to 767 (VPFLIFNGVVIGLLTLIAFIA), 791 to 811 (LLHAQTMAFVVLSFSQLVHSF), 831 to 851 (LVFSLLIGVLMQVCIISIPPL), and 865 to 885 (WGFVLLLSIIPLVVNEIIKLA). Residues asparagine 710 and aspartate 714 each contribute to the Ca(2+) site.

This sequence belongs to the cation transport ATPase (P-type) (TC 3.A.3) family. Type IIA subfamily.

It is found in the cell membrane. The enzyme catalyses Ca(2+)(in) + ATP + H2O = Ca(2+)(out) + ADP + phosphate + H(+). Inhibited by cyclopiazonic acid (CPA). Catalyzes the hydrolysis of ATP coupled with the transport of calcium. In Bacillus cereus (strain ATCC 10987 / NRS 248), this protein is Calcium-transporting ATPase 1.